The primary structure comprises 111 residues: Large ribosomal subunit protein uL22 (111 aa).

Belongs to the universal ribosomal protein uL22 family. Part of the 50S ribosomal subunit.

In terms of biological role, this protein binds specifically to 23S rRNA; its binding is stimulated by other ribosomal proteins, e.g. L4, L17, and L20. It is important during the early stages of 50S assembly. It makes multiple contacts with different domains of the 23S rRNA in the assembled 50S subunit and ribosome. Functionally, the globular domain of the protein is located near the polypeptide exit tunnel on the outside of the subunit, while an extended beta-hairpin is found that lines the wall of the exit tunnel in the center of the 70S ribosome. This is Large ribosomal subunit protein uL22 from Chlamydia trachomatis serovar L2 (strain ATCC VR-902B / DSM 19102 / 434/Bu).